Here is a 596-residue protein sequence, read N- to C-terminus: Chitooligosaccharidolytic beta-N-acetylglucosaminidase (596 aa).

The first 23 residues, 1–23 (MWLQAICIYTVFIIIGCGIPTAA), serve as a signal peptide directing secretion. 3 N-linked (GlcNAc...) asparagine glycosylation sites follow: Asn-166, Asn-264, and Asn-377.

This sequence belongs to the glycosyl hydrolase 20 family.

It catalyses the reaction Hydrolysis of terminal non-reducing N-acetyl-D-hexosamine residues in N-acetyl-beta-D-hexosaminides.. Functionally, active during metamorphosis to degrade chitin. This Bombyx mori (Silk moth) protein is Chitooligosaccharidolytic beta-N-acetylglucosaminidase.